A 247-amino-acid polypeptide reads, in one-letter code: Orotidine 5'-phosphate decarboxylase (247 aa).

Residues aspartate 22, lysine 44, 71-80 (DLKFHDIPNT), threonine 131, arginine 192, glutamine 201, glycine 221, and arginine 222 each bind substrate. Catalysis depends on lysine 73, which acts as the Proton donor.

This sequence belongs to the OMP decarboxylase family. Type 1 subfamily. As to quaternary structure, homodimer.

The catalysed reaction is orotidine 5'-phosphate + H(+) = UMP + CO2. The protein operates within pyrimidine metabolism; UMP biosynthesis via de novo pathway; UMP from orotate: step 2/2. Functionally, catalyzes the decarboxylation of orotidine 5'-monophosphate (OMP) to uridine 5'-monophosphate (UMP). This is Orotidine 5'-phosphate decarboxylase from Pectobacterium atrosepticum (strain SCRI 1043 / ATCC BAA-672) (Erwinia carotovora subsp. atroseptica).